The following is a 297-amino-acid chain: Heme A synthase (297 aa).

At 1–6 (MHKRLK) the chain is on the cytoplasmic side. A helical membrane pass occupies residues 7 to 27 (IYSVITSIGVLIVLLQGALVT). At 28 to 62 (KTGSGEGCGATWPLCFGEVIPTNPAIETIIEYSHR) the chain is on the extracellular side. Residues Cys35 and Cys42 are joined by a disulfide bond. Glu58 is an active-site residue. Residue His61 participates in heme o binding. Residues 63-83 (IVSGLVGAMIIILAIWAWKQL) form a helical membrane-spanning segment. Over 84-93 (KHMREAKALS) the chain is Cytoplasmic. The helical transmembrane segment at 94–114 (FAAVILIIFQGLLGAGAVVFG) threads the bilayer. The Extracellular segment spans residues 115 to 118 (QSKA). The helical transmembrane segment at 119–139 (ILALHFGISAMSLAAVVLLTI) threads the bilayer. His123 serves as a coordination point for heme o. The Cytoplasmic segment spans residues 140 to 156 (LAFEDGREHTMAPKVSR). The chain crosses the membrane as a helical span at residues 157-177 (GFKYYVFFVITYCYAVIYSGA). At 178–210 (YVKHSEATLACAGFPLCNGQIFPGLYGPVGAHY) the chain is on the extracellular side. An intrachain disulfide couples Cys188 to Cys194. The helical transmembrane segment at 211–231 (FHRVVGTILLLFLLILMIWTL) threads the bilayer. His212 is a binding site for heme b. Residues 232–242 (SRYRHYRVLTW) are Cytoplasmic-facing. The helical transmembrane segment at 243–263 (TAVLSFLLVVGQFISGISIVF) threads the bilayer. Topologically, residues 264–271 (TQNALSVG) are extracellular. Residues 272–292 (LIHALIISILFSALSYMTMII) traverse the membrane as a helical segment. Residue His274 participates in heme b binding. The Cytoplasmic portion of the chain corresponds to 293-297 (TRPSH).

The protein belongs to the COX15/CtaA family. Type 1 subfamily. Interacts with CtaB. Heme b is required as a cofactor.

The protein localises to the cell membrane. The catalysed reaction is Fe(II)-heme o + 2 A + H2O = Fe(II)-heme a + 2 AH2. The protein operates within porphyrin-containing compound metabolism; heme A biosynthesis; heme A from heme O: step 1/1. Catalyzes the conversion of heme O to heme A by two successive hydroxylations of the methyl group at C8. The first hydroxylation forms heme I, the second hydroxylation results in an unstable dihydroxymethyl group, which spontaneously dehydrates, resulting in the formyl group of heme A. This is Heme A synthase from Alkalihalophilus pseudofirmus (strain ATCC BAA-2126 / JCM 17055 / OF4) (Bacillus pseudofirmus).